We begin with the raw amino-acid sequence, 94 residues long: Large ribosomal subunit protein eL14 (94 aa).

The protein belongs to the eukaryotic ribosomal protein eL14 family.

This is Large ribosomal subunit protein eL14 from Methanopyrus kandleri (strain AV19 / DSM 6324 / JCM 9639 / NBRC 100938).